The sequence spans 370 residues: MPVLSTTHRLPLSVERERNREDDSLTNLQWLQDFSILSTDLSSIANSRPPVPRVSQGPCSPPAGDTASCQAPRTGKQRVTVPTAWASLPTLSPSPVQEVDYRTNANVKPPYSYATLICMAMEASQQRKLTLSAIYNWITQNFCYYRHADPSWQNSIRHNLSLNKCFMKVPRGKDEPGKGGFWQMDPRYADMFVNGVLKRRRMPSSHLDPPRCNKTIGHHPYLPVSRPGSHHMQHISGGHRQSRRYEKPNPVLPAFRAPERQGDTLFTPEDPLQGSNFDDLDLQAALISMCWEGDLAASNLNSTLTGNSGMDMNQQDPPMQDNHWYLSTEGQQTWEQVKEEPVVEQWYSETGFVEDVLYECPPWERVETLL.

The disordered stretch occupies residues 45–74; that stretch reads ANSRPPVPRVSQGPCSPPAGDTASCQAPRT. A DNA-binding region (fork-head) is located at residues 108 to 202; it reads KPPYSYATLI…VNGVLKRRRM (95 aa). The segment at 227 to 246 is disordered; the sequence is PGSHHMQHISGGHRQSRRYE.

The protein belongs to the FOXJ1 family.

Its subcellular location is the nucleus. Its function is as follows. Key transcription factor required for motile ciliogenesis. Activates genes essential for motile cilia formation and function. The polypeptide is Forkhead box protein J1.2 (Xenopus laevis (African clawed frog)).